Reading from the N-terminus, the 291-residue chain is MDYLVKALAYDGKVRAYAANTTDTINEAQRRHHTWPTASAAIGRTMTATVMMGAMLKGENKLTVKIEGGGPIGAIIADGNAKGQVRGYVSNPQVHFDLNEHGKLDVRRAVGTSGTLSVVKDIGLKDHFTGQTEIVSGEIGDDFTYYLVSSEQVPSSVGVGVLVNPDNSILAAGGFIIQLLPGTEDAVIERLEKRLSTIEPISKLIEKGMTPEEILEEVLGEKPQILETVPVEFSCNCSKERFANGIISLGKAEIDDMIEQDGQAEAQCHFCNETYVFTKEELEELREEITR.

Cystine bridges form between Cys235–Cys237 and Cys268–Cys271.

This sequence belongs to the HSP33 family. Under oxidizing conditions two disulfide bonds are formed involving the reactive cysteines. Under reducing conditions zinc is bound to the reactive cysteines and the protein is inactive.

It is found in the cytoplasm. In terms of biological role, redox regulated molecular chaperone. Protects both thermally unfolding and oxidatively damaged proteins from irreversible aggregation. Plays an important role in the bacterial defense system toward oxidative stress. The sequence is that of 33 kDa chaperonin from Bacillus pumilus (strain SAFR-032).